The sequence spans 207 residues: Large ribosomal subunit protein uL4 (207 aa).

The interval 49–77 (HAVKNRSAVRGGGKKPWRQKGTGRARQGS) is disordered. The segment covering 60 to 71 (GGKKPWRQKGTG) has biased composition (basic residues).

This sequence belongs to the universal ribosomal protein uL4 family. In terms of assembly, part of the 50S ribosomal subunit.

In terms of biological role, one of the primary rRNA binding proteins, this protein initially binds near the 5'-end of the 23S rRNA. It is important during the early stages of 50S assembly. It makes multiple contacts with different domains of the 23S rRNA in the assembled 50S subunit and ribosome. Functionally, forms part of the polypeptide exit tunnel. This is Large ribosomal subunit protein uL4 from Levilactobacillus brevis (strain ATCC 367 / BCRC 12310 / CIP 105137 / JCM 1170 / LMG 11437 / NCIMB 947 / NCTC 947) (Lactobacillus brevis).